The primary structure comprises 276 residues: 2-hydroxy-6-oxo-2,4-heptadienoate hydrolase (276 aa).

Positions 28–259 (NPVVLVHGSG…GRCGHWVQIE (232 aa)) constitute an AB hydrolase-1 domain. Active-site residues include Ser-105, Asp-226, and His-254.

This sequence belongs to the DmpD/TodF/XylF esterase family.

The enzyme catalyses (2Z,4E)-2-hydroxy-6-oxohepta-2,4-dienoate + H2O = (2Z)-2-hydroxypenta-2,4-dienoate + acetate + H(+). It functions in the pathway xenobiotic degradation; toluene degradation. In terms of biological role, catalyzes the hydrolysis of 2-hydroxy-6-oxohepta-2,4-dienoate into 2-hydroxypenta-2,4-dienoate and acetate. This Pseudomonas putida (strain ATCC 700007 / DSM 6899 / JCM 31910 / BCRC 17059 / LMG 24140 / F1) protein is 2-hydroxy-6-oxo-2,4-heptadienoate hydrolase (todF).